A 5478-amino-acid polypeptide reads, in one-letter code: Mucin-12 (5478 aa).

Positions 1–16 (MLVIWILTLALRLCAS) are cleaved as a signal peptide. Residues 17–5380 (VTTVTPEGSA…EFNIAKSLVY (5364 aa)) are Extracellular-facing. N-linked (GlcNAc...) asparagine glycans are attached at residues asparagine 154, asparagine 170, and asparagine 176. The disordered stretch occupies residues 212–737 (LDSSTNSGHS…GSTETTLLPD (526 aa)). Repeat unit 1 spans residues 222–240 (EESTVSHSGPGATGTTLFP). The 28 X 19 AA approximate tandem repeats of E-E-S-X-X-X-H-X-X-P-X-X-T-X-T-X-X-X-P stretch occupies residues 222–4761 (EESTVSHSGP…PGSTQTMHFP (4540 aa)). Polar residues-rich tracts occupy residues 226 to 246 (VSHS…SATS), 255 to 288 (SPIT…SSPR), 296 to 313 (PART…TSHS), and 325 to 342 (DSTT…SHSI). Low complexity predominate over residues 343–366 (PGSTDTTLSPGTTTPSSLGPESTT). Residues 367–387 (FHSSPGYTKTTRLPDNTTTSG) are compositionally biased toward polar residues. N-linked (GlcNAc...) asparagine glycosylation is present at asparagine 382. Residues 396-413 (HSSTGSPHTTLSPSSSTT) show a composition bias toward low complexity. Residues 419 to 440 (TTFQSWPSSKDTSPAPSGTTSA) show a composition bias toward polar residues. Low complexity-rich tracts occupy residues 445–466 (STTY…SSTT) and 478–495 (SSPV…SATS). 2 consecutive repeat copies span residues 471 to 489 (EEST…TPPP) and 499 to 517 (EEST…MHFP). The span at 531-554 (TFHGSTTHTKSSTPSTTAALAHTS) shows a compositional bias: low complexity. Polar residues-rich tracts occupy residues 555 to 575 (YHSS…TISG) and 608 to 648 (STPS…SPDT). A compositionally biased stretch (low complexity) spans 654-669 (SMTSSGVSEESTTSHS). Repeat 4 spans residues 662–680 (EESTTSHSRPGSTHTTAFP). 2 stretches are compositionally biased toward polar residues: residues 670–715 (RPGS…TASS) and 722–737 (TFHS…LLPD). Residue asparagine 738 is glycosylated (N-linked (GlcNAc...) asparagine). 4 disordered regions span residues 749-4847 (MPVH…HFTT), 4887-5034 (SSRS…THTV), 5048-5071 (STAF…TASD), and 5093-5112 (ASSS…TSPS). 2 stretches are compositionally biased toward polar residues: residues 751–783 (VHSS…WPSS) and 792–842 (TTTS…TQTM). Copy 5 of the repeat occupies 827–845 (EESTTYHSSPGSTQTMHFP). The span at 859–877 (TSHSSTTHTISSAPSTTSA) shows a compositional bias: low complexity. 2 stretches are compositionally biased toward polar residues: residues 884–899 (SYHS…HFPD) and 928–970 (RSTT…TTFH). The span at 971–1007 (SSPRSPATTLSPASTTSSGVSEESTTSRSRPGSTHTT) shows a compositional bias: low complexity. A compositionally biased stretch (polar residues) spans 1009–1021 (FPDSTTTPGLSRH). The segment covering 1022-1065 (STTSHSSPGSTDTTLLPASTTTSGPSQESTTSHSSSGSTDTALS) has biased composition (low complexity). 2 stretches are compositionally biased toward polar residues: residues 1066–1101 (PGST…TSSG) and 1108–1138 (RVHS…TAFQ). Residues 1139–1157 (THPASTHTTPSPPSTATAP) are compositionally biased toward low complexity. Residues 1159-1177 (EESTTYHRSPGSTPTTHFP) form repeat 6. Composition is skewed to polar residues over residues 1160–1184 (ESTT…TTSG) and 1191–1207 (IFHS…SSAH). Low complexity-rich tracts occupy residues 1208 to 1220 (STTS…TTSR), 1229 to 1241 (TTLP…PGLS), and 1249 to 1262 (SSPR…SPAS). 3 stretches are compositionally biased toward polar residues: residues 1271–1324 (ESTT…TTSV), 1331–1357 (TFHS…TEES), and 1364–1377 (PAST…TLTT). 2 stretches are compositionally biased toward low complexity: residues 1384-1396 (STTF…STGT) and 1411-1438 (ESTP…SLSE). Residues 1439–1448 (KSTTFYTSPR) are compositionally biased toward polar residues. The span at 1458–1481 (TTTSSGVSEESSTSHSQPGSTHTT) shows a compositional bias: low complexity. Repeat 7 spans residues 1466-1484 (EESSTSHSQPGSTHTTAFP). The segment covering 1483 to 1537 (FPDSTTTSDLSQEPTTSHSSQGSTEATLSPGSTTASSLGQQSTTFHSSPGDTETT) has biased composition (polar residues). Residues 1552–1568 (STPTHSSTGSLHTTLTP) are compositionally biased toward low complexity. Polar residues-rich tracts occupy residues 1569 to 1586 (ASST…FQSW) and 1606 to 1630 (VSTT…TTLG). Copy 8 of the repeat occupies 1633 to 1651 (EESTTVHSSPGATGTALFP). Polar residues predominate over residues 1653–1708 (RSATSVLVGEPTTSPISSGSTETTALPGSTTTAGLSEKSTTFYSSPRSPDTTLSPA). Low complexity predominate over residues 1709-1724 (STTSSGVSEESTTSHS). Copy 9 of the repeat occupies 1717-1735 (EESTTSHSRPGSTHTTAFP). Polar residues-rich tracts occupy residues 1725-1797 (RPGS…TTAS) and 1805-1840 (PVHS…SSKD). An N-linked (GlcNAc...) asparagine glycan is attached at asparagine 1793. Composition is skewed to low complexity over residues 1856-1877 (STTS…SSTT) and 1889-1906 (SSPV…STTS). 2 consecutive repeat copies span residues 1882–1900 (EEST…TPSP) and 1910–1928 (EEST…MHFP). Residues 1914 to 1935 (AYHSSPGSTQTMHFPESSTASG) show a composition bias toward polar residues. Residues 1943–1959 (SHSSTTHTISSPPSTTS) show a composition bias toward low complexity. 2 stretches are compositionally biased toward polar residues: residues 1967–1982 (SYHS…HFPD) and 2011–2053 (RSTT…TTFH). The segment covering 2054–2082 (SSPRSPATTLSPASTTSSGVSEESTTSHS) has biased composition (low complexity). Repeat unit 12 spans residues 2075-2093 (EESTTSHSRPGSTHTTAFP). A compositionally biased stretch (polar residues) spans 2083-2104 (RPGSTHTTAFPDSTTTPGLSRH). Residues 2105-2130 (STTSHSSPGSTDTTLLPASTTTSGPS) show a composition bias toward low complexity. Polar residues-rich tracts occupy residues 2131–2184 (QEST…TSSG) and 2191–2221 (RVHS…TAFQ). A compositionally biased stretch (low complexity) spans 2222-2240 (THPASTHTTPSPPSTATAP). Residues 2242 to 2260 (EESTTYHRSPGSTPTTHFP) form repeat 13. Composition is skewed to polar residues over residues 2243–2267 (ESTT…TTSG) and 2274–2290 (IFHS…SSAH). Composition is skewed to low complexity over residues 2291–2303 (STTS…TTSR), 2312–2324 (TTLP…PGLS), and 2332–2345 (SSPR…SPAS). Residues 2354 to 2392 (ESTTSRSQPGSTHSTVSPASTTTPGLSEESTTVYSSSPG) are compositionally biased toward polar residues. The segment covering 2393-2407 (STETTVFPRTPTTSV) has biased composition (low complexity). Composition is skewed to polar residues over residues 2414–2440 (TFHS…TEES) and 2447–2460 (PAST…TLTT). 2 stretches are compositionally biased toward low complexity: residues 2467–2483 (STTF…TLSP) and 2494–2521 (ESTP…SLSE). Over residues 2522 to 2531 (KSTTFYTSPR) the composition is skewed to polar residues. Positions 2541–2564 (TTTSSGVSEESSTSHSQPGSTHTT) are enriched in low complexity. Copy 14 of the repeat occupies 2549 to 2567 (EESSTSHSQPGSTHTTAFP). Polar residues predominate over residues 2566 to 2578 (FPDSTTTPGLSRH). A compositionally biased stretch (low complexity) spans 2579 to 2604 (STTSHSSPGSTDTTLLPASTTTSGPS). 2 stretches are compositionally biased toward polar residues: residues 2605–2658 (QEST…TSSG) and 2665–2695 (RVHS…TTFQ). The span at 2696–2714 (THPASTHTTPSPPSTATAP) shows a compositional bias: low complexity. Residues 2716 to 2734 (EESTTYHRSPGSTPTTHFP) form repeat 15. Composition is skewed to polar residues over residues 2717-2741 (ESTT…TTSG) and 2748-2764 (IFHS…SSAH). 3 stretches are compositionally biased toward low complexity: residues 2765–2777 (STTS…TTSR), 2786–2798 (TTLP…PGLS), and 2806–2819 (SSPR…SPAS). Polar residues-rich tracts occupy residues 2828-2881 (ESTT…TTSV), 2888-2914 (TFHS…TEES), and 2921-2934 (PAST…TLTT). Low complexity-rich tracts occupy residues 2941–2957 (STTF…TLSP) and 2968–2995 (ESTP…SLSE). The segment covering 2996-3005 (KSTTFYTSPR) has biased composition (polar residues). The segment covering 3015-3038 (TTTSSGVSEESSTSHSQPGSTHTT) has biased composition (low complexity). The stretch at 3023-3041 (EESSTSHSQPGSTHTTAFP) is repeat 16. The span at 3040-3094 (FPDSTTTSGLSQEPTASHSSQGSTEATLSPGSTTASSLGQQSTTFHSSPGDTETT) shows a compositional bias: polar residues. Over residues 3109–3125 (STPTHSSTGSLHTTLTP) the composition is skewed to low complexity. 2 stretches are compositionally biased toward polar residues: residues 3126 to 3143 (ASST…FQSW) and 3163 to 3187 (VSTT…TTLG). Repeat 17 spans residues 3190–3208 (EESTTVHSSPGATGTALFP). The span at 3210–3265 (RSATSVLVGEPTTSPISSGSTETTALPGSTTTAGLSEKSTTFYSSPRSPDTTLSPA) shows a compositional bias: polar residues. A compositionally biased stretch (low complexity) spans 3266–3281 (STTSSGVSEESTTSHS). Residues 3274-3292 (EESTTSHSRPGSTHTTAFP) form repeat 18. 2 stretches are compositionally biased toward polar residues: residues 3282 to 3354 (RPGS…TTAS) and 3362 to 3397 (PVHS…NSKD). Asparagine 3350 is a glycosylation site (N-linked (GlcNAc...) asparagine). Composition is skewed to low complexity over residues 3413–3434 (STTS…SSTT) and 3446–3463 (SSPV…STTS). Repeat copies occupy residues 3439–3457 (EEST…TPSP) and 3467–3485 (EEST…MHFP). Residues 3468–3482 (ESTTYHSSPGSTQTM) show a composition bias toward polar residues. The span at 3499-3517 (TSHSSTTHTISSAPSTTSA) shows a compositional bias: low complexity. Polar residues-rich tracts occupy residues 3524–3539 (SYHS…HFPD) and 3568–3610 (RSTT…TTFH). A compositionally biased stretch (low complexity) spans 3611-3639 (SSPRSPATTLSPASTTSSGVSEESTTSHS). Residues 3632–3650 (EESTTSHSRPGSTHTTAFP) form repeat 21. The span at 3640–3661 (RPGSTHTTAFPDSTTTPGLSRH) shows a compositional bias: polar residues. Over residues 3662–3705 (STTSHSSPGSTDTTLLPASTTTSGSSQESTTSHSSSGSTDTALS) the composition is skewed to low complexity. Polar residues-rich tracts occupy residues 3706 to 3741 (PGST…TSSG) and 3748 to 3778 (RVHS…TAFQ). A compositionally biased stretch (low complexity) spans 3779 to 3797 (THPASTHTTPSPPSTATAP). Repeat unit 22 spans residues 3799-3817 (EESTTYHRSPGSTPTTHFP). 2 stretches are compositionally biased toward polar residues: residues 3800–3824 (ESTT…TTSG) and 3831–3847 (IFHS…SSAH). 3 stretches are compositionally biased toward low complexity: residues 3848–3860 (STTS…TTSR), 3869–3881 (TTLP…PGLS), and 3889–3902 (SSPR…SPAS). 3 stretches are compositionally biased toward polar residues: residues 3911–3963 (ESTT…TTTS), 3971–3997 (TFHS…TEES), and 4004–4017 (PAST…TLTT). 2 stretches are compositionally biased toward low complexity: residues 4024–4036 (STTF…STGT) and 4051–4078 (ESTP…SLSE). A compositionally biased stretch (polar residues) spans 4079–4088 (KSTTFYTSPR). Residues 4098–4121 (TTTSSGVSEESSTSHSQPGSTHTT) are compositionally biased toward low complexity. Copy 23 of the repeat occupies 4106-4124 (EESSTSHSQPGSTHTTAFP). Over residues 4123-4177 (FPDSTTTSGLSQEPTTSHSSQGSTEATLSPGSTTASSLGQQSTTFHSSPGDTETT) the composition is skewed to polar residues. Low complexity predominate over residues 4192-4208 (STPTHSSTGSLHTTLTP). The segment covering 4209–4226 (ASSTSTGLQEESTTFQSW) has biased composition (polar residues). Residues 4227–4249 (PSSSDTTPSPPSTTAVPVEVSTT) show a composition bias toward low complexity. The span at 4250 to 4270 (YHSRPSSTPTTHFSASSTTLG) shows a compositional bias: polar residues. Copy 24 of the repeat occupies 4273 to 4291 (EESTTVHSSPGATGTALFP). Residues 4293 to 4348 (RSATSVLVGEPTTSPISSGSTETTALPGSTTTAGLSEKSTTFYSSPRSPDTTLSPA) show a composition bias toward polar residues. Over residues 4349-4364 (STTSSGVSEESTTSHS) the composition is skewed to low complexity. Composition is skewed to polar residues over residues 4369 to 4437 (MHTT…TTAS) and 4445 to 4480 (PVHS…NSKD). Asparagine 4433 is a glycosylation site (N-linked (GlcNAc...) asparagine). Low complexity-rich tracts occupy residues 4496 to 4517 (STTS…SSTT) and 4529 to 4546 (SSPV…STTS). 2 consecutive repeat copies span residues 4522–4540 (EEST…TPSP) and 4550–4568 (EEST…MHFP). Polar residues predominate over residues 4551–4571 (ESTTYHSSPGSTQTMHFPESN). Asparagine 4571 carries an N-linked (GlcNAc...) asparagine glycan. The span at 4582-4600 (TSHSSTTHTISSAPSTTSA) shows a compositional bias: low complexity. Polar residues-rich tracts occupy residues 4607–4622 (SYHS…HFPD) and 4651–4688 (RSTT…LSEK). 2 stretches are compositionally biased toward low complexity: residues 4689 to 4710 (STTF…SSTT) and 4722 to 4739 (SSPV…STTS). A run of 2 repeats spans residues 4715–4733 (EEST…TPSP) and 4743–4761 (EEST…MHFP). Polar residues predominate over residues 4747–4768 (AYHSSPGSTQTMHFPESSTASG). The segment covering 4776 to 4792 (SHSSTTHTISSPPSTTS) has biased composition (low complexity). Composition is skewed to polar residues over residues 4800-4814 (SYHS…THFP) and 4887-4917 (SSRS…SQAE). Residues 4918–4931 (STHTTAFPASTTTS) show a composition bias toward low complexity. Composition is skewed to polar residues over residues 4932 to 5024 (GLSQ…STPF) and 5048 to 5061 (STAF…TGTT). The segment covering 5094–5112 (SSSTSGLTEESTTFHTSPS) has biased composition (low complexity). The 39-residue stretch at 5116 to 5154 (TIVSTESLETLAPGLCQEGQIWNGKQCVCPQGYVGYQCL) folds into the EGF-like domain. A disulfide bridge connects residues cysteine 5144 and cysteine 5153. Positions 5168 to 5275 (LNATLGMTVK…TRTTLLDPDS (108 aa)) constitute an SEA domain. N-linked (GlcNAc...) asparagine glycans are attached at residues asparagine 5169, asparagine 5182, asparagine 5197, asparagine 5228, and asparagine 5264. The Cleavage motif signature appears at 5226–5233 (LLNGSIVV). Residues 5381 to 5401 (GIVGAVMAVLLLALIILIILF) traverse the membrane as a helical segment. Topologically, residues 5402 to 5478 (SLSQRKRHRE…QRPEMVASTV (77 aa)) are cytoplasmic.

In terms of tissue distribution, ubiquitous, with higher expression in colon. Down-regulated in colorectal cancer as well as in the colon of patients with ulcerative colitis (UC) and Crohn's disease (CD).

It localises to the membrane. Functionally, involved in epithelial cell protection, adhesion modulation, and signaling. May be involved in epithelial cell growth regulation. Stimulated by both cytokine TNF-alpha and TGF-beta in intestinal epithelium. This is Mucin-12 (MUC12) from Homo sapiens (Human).